The primary structure comprises 237 residues: Eukaryotic translation initiation factor 3 subunit J (237 aa).

The tract at residues 20–64 (ANNINKWEGEDDDEDVKESWEDEEEKKDEEKPTKTEAPAKTKPNK) is disordered. Residues 28–46 (GEDDDEDVKESWEDEEEKK) show a composition bias toward acidic residues. The span at 47-58 (DEEKPTKTEAPA) shows a compositional bias: basic and acidic residues. Positions 63–115 (NKVLKAKLLEQECLEKEEEAKRLANMSTEEKLAEKLRLQKIQEESDLKSALET) form a coiled coil.

It belongs to the eIF-3 subunit J family. As to quaternary structure, component of the eukaryotic translation initiation factor 3 (eIF-3) complex. The eIF-3 complex interacts with pix.

It localises to the cytoplasm. Functionally, component of the eukaryotic translation initiation factor 3 (eIF-3) complex, which is involved in protein synthesis of a specialized repertoire of mRNAs and, together with other initiation factors, stimulates binding of mRNA and methionyl-tRNAi to the 40S ribosome. The eIF-3 complex specifically targets and initiates translation of a subset of mRNAs involved in cell proliferation. The chain is Eukaryotic translation initiation factor 3 subunit J from Drosophila grimshawi (Hawaiian fruit fly).